Here is a 191-residue protein sequence, read N- to C-terminus: Potassium-transporting ATPase KdpC subunit (191 aa).

A helical membrane pass occupies residues 6–26 (PAILLFILLTLVTGGLYPLLT).

This sequence belongs to the KdpC family. The system is composed of three essential subunits: KdpA, KdpB and KdpC.

The protein localises to the cell inner membrane. Part of the high-affinity ATP-driven potassium transport (or Kdp) system, which catalyzes the hydrolysis of ATP coupled with the electrogenic transport of potassium into the cytoplasm. This subunit acts as a catalytic chaperone that increases the ATP-binding affinity of the ATP-hydrolyzing subunit KdpB by the formation of a transient KdpB/KdpC/ATP ternary complex. This chain is Potassium-transporting ATPase KdpC subunit, found in Enterobacter sp. (strain 638).